The following is a 184-amino-acid chain: Potassium-transporting ATPase KdpC subunit (184 aa).

A helical transmembrane segment spans residues 6–26 (TAVLYTIISAVFLGLGYPLIM).

The protein belongs to the KdpC family. In terms of assembly, the system is composed of three essential subunits: KdpA, KdpB and KdpC.

The protein resides in the cell inner membrane. In terms of biological role, part of the high-affinity ATP-driven potassium transport (or Kdp) system, which catalyzes the hydrolysis of ATP coupled with the electrogenic transport of potassium into the cytoplasm. This subunit acts as a catalytic chaperone that increases the ATP-binding affinity of the ATP-hydrolyzing subunit KdpB by the formation of a transient KdpB/KdpC/ATP ternary complex. This Acidobacterium capsulatum (strain ATCC 51196 / DSM 11244 / BCRC 80197 / JCM 7670 / NBRC 15755 / NCIMB 13165 / 161) protein is Potassium-transporting ATPase KdpC subunit.